Consider the following 567-residue polypeptide: Dihydroxy-acid dehydratase 3 (567 aa).

A [2Fe-2S] cluster-binding site is contributed by Cys-57. Asp-89 is a Mg(2+) binding site. Position 130 (Cys-130) interacts with [2Fe-2S] cluster. Mg(2+) is bound by residues Asp-131 and Lys-132. An N6-carboxylysine modification is found at Lys-132. Residue Cys-202 coordinates [2Fe-2S] cluster. Glu-454 lines the Mg(2+) pocket. The active-site Proton acceptor is Ser-480.

Belongs to the IlvD/Edd family. As to quaternary structure, homodimer. The cofactor is [2Fe-2S] cluster. Mg(2+) serves as cofactor.

The enzyme catalyses (2R)-2,3-dihydroxy-3-methylbutanoate = 3-methyl-2-oxobutanoate + H2O. The catalysed reaction is (2R,3R)-2,3-dihydroxy-3-methylpentanoate = (S)-3-methyl-2-oxopentanoate + H2O. Its pathway is amino-acid biosynthesis; L-isoleucine biosynthesis; L-isoleucine from 2-oxobutanoate: step 3/4. It functions in the pathway amino-acid biosynthesis; L-valine biosynthesis; L-valine from pyruvate: step 3/4. In terms of biological role, functions in the biosynthesis of branched-chain amino acids. Catalyzes the dehydration of (2R,3R)-2,3-dihydroxy-3-methylpentanoate (2,3-dihydroxy-3-methylvalerate) into 2-oxo-3-methylpentanoate (2-oxo-3-methylvalerate) and of (2R)-2,3-dihydroxy-3-methylbutanoate (2,3-dihydroxyisovalerate) into 2-oxo-3-methylbutanoate (2-oxoisovalerate), the penultimate precursor to L-isoleucine and L-valine, respectively. The protein is Dihydroxy-acid dehydratase 3 of Aromatoleum aromaticum (strain DSM 19018 / LMG 30748 / EbN1) (Azoarcus sp. (strain EbN1)).